Reading from the N-terminus, the 171-residue chain is 6,7-dimethyl-8-ribityllumazine synthase (171 aa).

5-amino-6-(D-ribitylamino)uracil is bound by residues phenylalanine 24, 58-60 (ALE), and 82-84 (AVI). Position 87–88 (87–88 (ET)) interacts with (2S)-2-hydroxy-3-oxobutyl phosphate. Histidine 90 (proton donor) is an active-site residue. Asparagine 115 serves as a coordination point for 5-amino-6-(D-ribitylamino)uracil. Arginine 129 contributes to the (2S)-2-hydroxy-3-oxobutyl phosphate binding site. The disordered stretch occupies residues 150–171 (ALDQLGDDEDEEEDEEDEEERA). Positions 154 to 171 (LGDDEDEEEDEEDEEERA) are enriched in acidic residues.

It belongs to the DMRL synthase family.

The enzyme catalyses (2S)-2-hydroxy-3-oxobutyl phosphate + 5-amino-6-(D-ribitylamino)uracil = 6,7-dimethyl-8-(1-D-ribityl)lumazine + phosphate + 2 H2O + H(+). The protein operates within cofactor biosynthesis; riboflavin biosynthesis; riboflavin from 2-hydroxy-3-oxobutyl phosphate and 5-amino-6-(D-ribitylamino)uracil: step 1/2. Its function is as follows. Catalyzes the formation of 6,7-dimethyl-8-ribityllumazine by condensation of 5-amino-6-(D-ribitylamino)uracil with 3,4-dihydroxy-2-butanone 4-phosphate. This is the penultimate step in the biosynthesis of riboflavin. This Burkholderia ambifaria (strain ATCC BAA-244 / DSM 16087 / CCUG 44356 / LMG 19182 / AMMD) (Burkholderia cepacia (strain AMMD)) protein is 6,7-dimethyl-8-ribityllumazine synthase.